The sequence spans 401 residues: MTTFGTPLSPHATKVMLLGSGELGKEVLIALQRLGVETIAVDRYENAPGQQVAHHARTITMSDPAQLKALIEQEKPDLVVPEIEAIATGMLEELEAAGTVRVIPTARAARLTMDREGIRRLAAETLALPTSPYVFCDSLEELQTAIDSKIGYPCVVKPVMSSSGKGQSKIALPKDVAPAWDHAMAGGRVSRGRVIVEGFVDFEYEITLLTVRALGADGQVETHFCEPIGHLQVSGDYVESWQPHPMRPAALEKSHEIARAVTDNLSGQGVFGVELFVKGDEVWFSEVSPRPHDTGMVTLCTQWQNEFELHARAILGLPVDTALKSPGASAVIYGGVDAAGIVFDGVADALRVPNTDIRLFGKPESFVKRRMGVALAFDADVDVARTHARLAASKVRPRAAG.

N(1)-(5-phospho-beta-D-ribosyl)glycinamide is bound by residues 22–23 and Glu-82; that span reads EL. ATP-binding positions include Arg-115, Lys-157, 162-167, 197-200, and Glu-205; these read SSGKGQ and EGFV. The ATP-grasp domain maps to 120 to 315; sequence RLAAETLALP…EFELHARAIL (196 aa). Mg(2+) is bound by residues Glu-274 and Glu-286. N(1)-(5-phospho-beta-D-ribosyl)glycinamide is bound by residues Asp-293, Lys-362, and 369 to 370; that span reads RR.

The protein belongs to the PurK/PurT family. In terms of assembly, homodimer.

The catalysed reaction is N(1)-(5-phospho-beta-D-ribosyl)glycinamide + formate + ATP = N(2)-formyl-N(1)-(5-phospho-beta-D-ribosyl)glycinamide + ADP + phosphate + H(+). The protein operates within purine metabolism; IMP biosynthesis via de novo pathway; N(2)-formyl-N(1)-(5-phospho-D-ribosyl)glycinamide from N(1)-(5-phospho-D-ribosyl)glycinamide (formate route): step 1/1. Involved in the de novo purine biosynthesis. Catalyzes the transfer of formate to 5-phospho-ribosyl-glycinamide (GAR), producing 5-phospho-ribosyl-N-formylglycinamide (FGAR). Formate is provided by PurU via hydrolysis of 10-formyl-tetrahydrofolate. The sequence is that of Formate-dependent phosphoribosylglycinamide formyltransferase from Polaromonas naphthalenivorans (strain CJ2).